The primary structure comprises 47 residues: Short neurotoxin D2A (47 aa).

2 disulfide bridges follow: Cys-3/Cys-24 and Cys-17/Cys-39.

Expressed by the venom gland.

Its subcellular location is the secreted. The polypeptide is Short neurotoxin D2A (Micrurus pyrrhocryptus (Coral snake)).